The following is a 254-amino-acid chain: PSME3-interacting protein (254 aa).

Met-1 is modified (N-acetylmethionine). At Ser-17 the chain carries Phosphoserine. The segment covering 22–39 (DERRKRRQEEWEKVRKPE) has biased composition (basic and acidic residues). Residues 22 to 52 (DERRKRRQEEWEKVRKPEDPEECPEEVYDPR) form a disordered region. Position 139 is an N6-acetyllysine (Lys-139). The segment at 155–195 (GAVKHKSSESGNSVKRLKPDPEPDDKNQEPSSCKSLGNTSL) is disordered. Over residues 171–182 (LKPDPEPDDKNQ) the composition is skewed to basic and acidic residues. Positions 183-195 (EPSSCKSLGNTSL) are enriched in polar residues. The segment at 201–254 (HCPSAAVCIGILPGLGAYSGSSDSESSSDSEGTINATGKIVSSIFRTNTFLEAP) is interaction with PSME3. Phosphoserine; by CK2 occurs at positions 222 and 228.

In terms of assembly, interacts (via C-terminus) with both free and 20S proteasome-bound forms of the proteasome activator complex subunit PSME3; the interaction is direct. Phosphorylation by CK2 stabilizes the interaction with PSME3.

The protein resides in the nucleus. Its function is as follows. Promotes the association of the proteasome activator complex subunit PSME3 with the 20S proteasome and regulates its activity. Inhibits PSME3-mediated degradation of some proteasome substrates, probably by affecting their diffusion rate into the catalytic chamber of the proteasome. Also inhibits the interaction of PSME3 with COIL, inhibits accumulation of PSME3 in Cajal bodies and positively regulates the number of Cajal bodies in the nucleus. The protein is PSME3-interacting protein of Homo sapiens (Human).